Consider the following 350-residue polypeptide: 3-dehydroquinate synthase (350 aa).

NAD(+)-binding positions include 106–110 (GVIGD), 130–131 (TS), lysine 143, and lysine 152. Residues glutamate 185, histidine 246, and histidine 263 each contribute to the Zn(2+) site.

It belongs to the sugar phosphate cyclases superfamily. Dehydroquinate synthase family. It depends on Co(2+) as a cofactor. Zn(2+) serves as cofactor. NAD(+) is required as a cofactor.

The protein localises to the cytoplasm. The enzyme catalyses 7-phospho-2-dehydro-3-deoxy-D-arabino-heptonate = 3-dehydroquinate + phosphate. The protein operates within metabolic intermediate biosynthesis; chorismate biosynthesis; chorismate from D-erythrose 4-phosphate and phosphoenolpyruvate: step 2/7. Catalyzes the conversion of 3-deoxy-D-arabino-heptulosonate 7-phosphate (DAHP) to dehydroquinate (DHQ). In Clostridium botulinum (strain Alaska E43 / Type E3), this protein is 3-dehydroquinate synthase.